Reading from the N-terminus, the 533-residue chain is Suppressor of cytokine signaling 6 (533 aa).

Disordered stretches follow at residues 54–136 and 177–199; these read CDIG…WPLR and ELRD…PGDL. The segment covering 59-69 has biased composition (basic and acidic residues); that stretch reads EDEKGKNRSKS. The span at 76 to 88 shows a compositional bias: basic residues; sequence LKRRLSAKQKTKG. The segment covering 177–189 has biased composition (basic and acidic residues); that stretch reads ELRDLQPEPRPES. Residues 382 to 489 form the SH2 domain; it reads WYWGPITRWE…TYPVRLTNPV (108 aa). In terms of domain architecture, SOCS box spans 484-533; sequence RLTNPVSRFMQVRSLQYLCRFVIRQYTRIDLIQKLPLPNKMKDYLQEKHY.

In terms of assembly, interacts with KIT (phosphorylated). Interacts with RBCK1. Interacts with phosphorylated IRS4. Interacts with PIM3.

It functions in the pathway protein modification; protein ubiquitination. Functionally, SOCS family proteins form part of a classical negative feedback system that regulates cytokine signal transduction. May be a substrate recognition component of a SCF-like ECS (Elongin BC-CUL2/5-SOCS-box protein) E3 ubiquitin-protein ligase complex which mediates the ubiquitination and subsequent proteasomal degradation of target proteins. Regulates KIT degradation by ubiquitination of the tyrosine-phosphorylated receptor. This Mus musculus (Mouse) protein is Suppressor of cytokine signaling 6 (Socs6).